The primary structure comprises 321 residues: Lipoyl synthase (321 aa).

C68, C73, C79, C94, C98, C101, and S308 together coordinate [4Fe-4S] cluster. A Radical SAM core domain is found at 80–297 (FNHGTATFMI…KAEALAMGFT (218 aa)).

It belongs to the radical SAM superfamily. Lipoyl synthase family. [4Fe-4S] cluster is required as a cofactor.

It localises to the cytoplasm. The catalysed reaction is [[Fe-S] cluster scaffold protein carrying a second [4Fe-4S](2+) cluster] + N(6)-octanoyl-L-lysyl-[protein] + 2 oxidized [2Fe-2S]-[ferredoxin] + 2 S-adenosyl-L-methionine + 4 H(+) = [[Fe-S] cluster scaffold protein] + N(6)-[(R)-dihydrolipoyl]-L-lysyl-[protein] + 4 Fe(3+) + 2 hydrogen sulfide + 2 5'-deoxyadenosine + 2 L-methionine + 2 reduced [2Fe-2S]-[ferredoxin]. It participates in protein modification; protein lipoylation via endogenous pathway; protein N(6)-(lipoyl)lysine from octanoyl-[acyl-carrier-protein]: step 2/2. In terms of biological role, catalyzes the radical-mediated insertion of two sulfur atoms into the C-6 and C-8 positions of the octanoyl moiety bound to the lipoyl domains of lipoate-dependent enzymes, thereby converting the octanoylated domains into lipoylated derivatives. In Salmonella arizonae (strain ATCC BAA-731 / CDC346-86 / RSK2980), this protein is Lipoyl synthase.